A 470-amino-acid polypeptide reads, in one-letter code: Uronate isomerase (470 aa).

The protein belongs to the metallo-dependent hydrolases superfamily. Uronate isomerase family.

The enzyme catalyses D-glucuronate = D-fructuronate. It catalyses the reaction aldehydo-D-galacturonate = keto-D-tagaturonate. It participates in carbohydrate metabolism; pentose and glucuronate interconversion. The sequence is that of Uronate isomerase from Salmonella heidelberg (strain SL476).